The sequence spans 886 residues: cytokinesis protein 3 (886 aa).

An SH3 domain is found at 6 to 67 (QLPCMVRALY…PSNFVHCLDI (62 aa)). Positions 72-88 (PGSSMSRTSASSFRYSS) are enriched in low complexity. A disordered region spans residues 72-189 (PGSSMSRTSA…DLSRSTPSPL (118 aa)). A compositionally biased stretch (polar residues) spans 89–104 (PQKSSIDTPITSSDQG). Over residues 135 to 154 (LNSLGSSLSLKKSVSRPPSS) the composition is skewed to low complexity. A compositionally biased stretch (polar residues) spans 155-188 (MSRTNLDVSSRWDNTADNDSQIDAQDLSRSTPSP). The residue at position 213 (serine 213) is a Phosphoserine. Disordered regions lie at residues 219–290 (TKST…SPSD) and 358–393 (RRGS…SPHT). Over residues 253 to 264 (DNSSKPRTSLQP) the composition is skewed to polar residues.

Belongs to the CYK3 family.

The protein localises to the cell tip. In terms of biological role, involved in cytokinesis. The chain is cytokinesis protein 3 (cyk3) from Schizosaccharomyces pombe (strain 972 / ATCC 24843) (Fission yeast).